The chain runs to 155 residues: Endoribonuclease YbeY (155 aa).

3 residues coordinate Zn(2+): H120, H124, and H130.

Belongs to the endoribonuclease YbeY family. Zn(2+) is required as a cofactor.

The protein localises to the cytoplasm. In terms of biological role, single strand-specific metallo-endoribonuclease involved in late-stage 70S ribosome quality control and in maturation of the 3' terminus of the 16S rRNA. The chain is Endoribonuclease YbeY from Staphylococcus epidermidis (strain ATCC 12228 / FDA PCI 1200).